Reading from the N-terminus, the 226-residue chain is Transcription repressor OFP12 (226 aa).

Residues 68 to 87 (SSTFTASTSTAANSSSSSAS) are compositionally biased toward low complexity. Positions 68–104 (SSTFTASTSTAANSSSSSASYDDSDNYGFAPDDDSPP) are disordered. Residues 152-217 (VKHYVQSPDP…IRAFADILVS (66 aa)) enclose the OVATE domain.

As to quaternary structure, interacts with KNAT1, KNAT2, KNAT3 and KNAT4. As to expression, expressed in roots, shoots, stems, flower buds and siliques.

Its subcellular location is the nucleus. Transcriptional repressor that regulates multiple aspects of plant growth and development through the regulation of BEL1-LIKE (BLH) and KNOX TALE (KNAT) homeodomain transcription factors. This chain is Transcription repressor OFP12 (OFP12), found in Arabidopsis thaliana (Mouse-ear cress).